Here is a 167-residue protein sequence, read N- to C-terminus: I-Kappa-B like protein I1 (167 aa).

3 ANK repeats span residues 54–86 (HGKQCVHIVSNPGIADPQEKLKLLMEWGADING), 91–121 (FGNTPLHIAAYTQNHKLATWLCNQPGINMGI), and 125–154 (LFKTPYYVACERHDIKIMNILRAKGGQCRI).

Belongs to the polydnaviridae I-Kappa-B-like protein family.

Its function is as follows. Suppresses the host immune response through NF-kappa-B inactivation. Possesses ankyrin repeat domains required for NF-kappa-B binding but lacks the regulatory regions required for dissociation from NF-kappa-B and degradation. Therefore, prevents host NF-kappa-B release and subsequent activation. This Microplitis demolitor (Parasitoid wasp) protein is I-Kappa-B like protein I1 (I1).